The following is a 340-amino-acid chain: Phenylalanine--tRNA ligase alpha subunit (340 aa).

Glu254 is a Mg(2+) binding site.

This sequence belongs to the class-II aminoacyl-tRNA synthetase family. Phe-tRNA synthetase alpha subunit type 1 subfamily. In terms of assembly, tetramer of two alpha and two beta subunits. The cofactor is Mg(2+).

The protein localises to the cytoplasm. It catalyses the reaction tRNA(Phe) + L-phenylalanine + ATP = L-phenylalanyl-tRNA(Phe) + AMP + diphosphate + H(+). The protein is Phenylalanine--tRNA ligase alpha subunit of Caldicellulosiruptor bescii (strain ATCC BAA-1888 / DSM 6725 / KCTC 15123 / Z-1320) (Anaerocellum thermophilum).